The primary structure comprises 1063 residues: MLSINRNAGMFVLPDFKQIQIDSFRHFLTDLLRLELQRFGTIKHANQQLEFKLLGELYRLEIPKFNEREAVYQSATYSSNLYAPAYLVDKKRGIIQKQTVFLGSIPLMSARGTFVIRGVSRCIVSQLLRSPGIYYTLSVQGVYTATIICNSGKSFKLELDRQGCLWVRVGRNSKAPLLLLLIALGLEMRYIPPMIVQRTKKLNQLLLCVEDAKIDLCKRLKLKQKTTQIELGVTDPIYSLFLKPYELGRMGRLNLNKRLNLRVSEFEILLRSQDLIVASDYLVQVSNGIGSLDDIDDLKHKRVKWVSDLFCVQLNMALKKLNVAVHTNLNKMEARISRMSLKSVVSSNAIATTFFRFVASYQLSQFLDQTNPLSEIVHKRKLSLLGPGGLTPRTARFRVRDIHPSQYGRICPVQTAEGQNAGVVNSFTICAHIGDNGAIKTSLYKVCTNSMQGHVIDMLPGEDEYSTIATESCLVVANSSNQFQSIPAQHRREFVTLRWDEIGFRNTLPVHSFSVGVVLIPFLEHDDATRALMGSNMQRQAVPLLKLERPIVGTGIESQVALDSGTVITAVQECKIHNVDATQIAYVPKDSFELLYINLLNYERSNNATCLHQRPIVECGETVQKGQLIADGSATVDGELALGKNVLVAYMPWEGYNFEDAVLINERLIYEDVYTSLHIERYEAEARETNQAIETITKQIPHLNAHVLRHLDETGVVSLGAWVETGDVLVGKLTAKQSEGLLHTPESKLLQDILGVQAFGTQDTCLKVPTRGEGRVIDVRWITRDNHLLGHRKVIHVYILQERKIQVGDKVAGRHGNKGVVSRILPRQDMPYLQDGTPVDMVLSPLGVPSRMNVGQVFECLLGLAGGYLNQHYRIMPFDERYGRESSRKLVFSELYKASQTTNYPWIFEPDSPGKSRLFDGRTGEVFNQPVTVGRAYMFKLIHQVDDKIHARSTGPYALVTQQPVRGRSRQGGQRVGEMEVWAFQGFGAACVLQELLTTKSDHATARAEAPNAIVTGNLVPKPIGTSDCLGVLIRELQCLGIQLDHTMLSQHNMIQYPNLNEE.

It belongs to the RNA polymerase beta chain family. In plastids the minimal PEP RNA polymerase catalytic core is composed of four subunits: alpha, beta, beta', and beta''. When a (nuclear-encoded) sigma factor is associated with the core the holoenzyme is formed, which can initiate transcription.

It localises to the plastid. Its subcellular location is the chloroplast. It catalyses the reaction RNA(n) + a ribonucleoside 5'-triphosphate = RNA(n+1) + diphosphate. Functionally, DNA-dependent RNA polymerase catalyzes the transcription of DNA into RNA using the four ribonucleoside triphosphates as substrates. The chain is DNA-directed RNA polymerase subunit beta from Zygnema circumcarinatum (Green alga).